We begin with the raw amino-acid sequence, 233 residues long: Ribose-5-phosphate isomerase A (233 aa).

Substrate is bound by residues 28–31 (SGST), 83–86 (DGAD), and 96–99 (KGGG). Glutamate 105 (proton acceptor) is an active-site residue. Lysine 123 is a substrate binding site.

This sequence belongs to the ribose 5-phosphate isomerase family. As to quaternary structure, homodimer.

It carries out the reaction aldehydo-D-ribose 5-phosphate = D-ribulose 5-phosphate. The protein operates within carbohydrate degradation; pentose phosphate pathway; D-ribose 5-phosphate from D-ribulose 5-phosphate (non-oxidative stage): step 1/1. Functionally, catalyzes the reversible conversion of ribose-5-phosphate to ribulose 5-phosphate. In Bartonella bacilliformis (strain ATCC 35685 / KC583 / Herrer 020/F12,63), this protein is Ribose-5-phosphate isomerase A.